The chain runs to 279 residues: 3-methyl-2-oxobutanoate hydroxymethyltransferase (279 aa).

2 residues coordinate Mg(2+): Asp43 and Asp82. 3-methyl-2-oxobutanoate contacts are provided by residues 43 to 44, Asp82, and Lys112; that span reads DS. Glu114 contributes to the Mg(2+) binding site. The active-site Proton acceptor is the Glu181.

This sequence belongs to the PanB family. In terms of assembly, homodecamer; pentamer of dimers. Requires Mg(2+) as cofactor.

Its subcellular location is the cytoplasm. It carries out the reaction 3-methyl-2-oxobutanoate + (6R)-5,10-methylene-5,6,7,8-tetrahydrofolate + H2O = 2-dehydropantoate + (6S)-5,6,7,8-tetrahydrofolate. Its pathway is cofactor biosynthesis; (R)-pantothenate biosynthesis; (R)-pantoate from 3-methyl-2-oxobutanoate: step 1/2. Functionally, catalyzes the reversible reaction in which hydroxymethyl group from 5,10-methylenetetrahydrofolate is transferred onto alpha-ketoisovalerate to form ketopantoate. This Bacillus pumilus (strain SAFR-032) protein is 3-methyl-2-oxobutanoate hydroxymethyltransferase.